The chain runs to 507 residues: ATP synthase subunit alpha, chloroplastic (507 aa).

170–177 (GDRQTGKT) is a binding site for ATP.

It belongs to the ATPase alpha/beta chains family. F-type ATPases have 2 components, CF(1) - the catalytic core - and CF(0) - the membrane proton channel. CF(1) has five subunits: alpha(3), beta(3), gamma(1), delta(1), epsilon(1). CF(0) has four main subunits: a, b, b' and c.

It is found in the plastid. Its subcellular location is the chloroplast thylakoid membrane. It carries out the reaction ATP + H2O + 4 H(+)(in) = ADP + phosphate + 5 H(+)(out). Produces ATP from ADP in the presence of a proton gradient across the membrane. The alpha chain is a regulatory subunit. In Nicotiana sylvestris (Wood tobacco), this protein is ATP synthase subunit alpha, chloroplastic.